The sequence spans 265 residues: Glutamate racemase (265 aa).

Residues 12 to 13 (DS) and 44 to 45 (YG) contribute to the substrate site. The active-site Proton donor/acceptor is Cys-75. Position 76–77 (76–77 (NT)) interacts with substrate. Cys-186 functions as the Proton donor/acceptor in the catalytic mechanism. Substrate is bound at residue 187–188 (TH).

Belongs to the aspartate/glutamate racemases family.

It carries out the reaction L-glutamate = D-glutamate. The protein operates within cell wall biogenesis; peptidoglycan biosynthesis. Its function is as follows. Provides the (R)-glutamate required for cell wall biosynthesis. The protein is Glutamate racemase of Pseudomonas paraeruginosa (strain DSM 24068 / PA7) (Pseudomonas aeruginosa (strain PA7)).